A 271-amino-acid chain; its full sequence is Glutamate racemase (271 aa).

Substrate is bound by residues 12-13 (DS) and 44-45 (YG). Catalysis depends on C75, which acts as the Proton donor/acceptor. 76–77 (NT) is a binding site for substrate. The active-site Proton donor/acceptor is C185. 186-187 (TH) contacts substrate.

The protein belongs to the aspartate/glutamate racemases family.

The enzyme catalyses L-glutamate = D-glutamate. It participates in cell wall biogenesis; peptidoglycan biosynthesis. Functionally, provides the (R)-glutamate required for cell wall biosynthesis. This Mycobacterium marinum (strain ATCC BAA-535 / M) protein is Glutamate racemase.